A 213-amino-acid polypeptide reads, in one-letter code: Transcriptional regulatory protein YdfI (213 aa).

The region spanning 3 to 118 (KVLIVDDHLV…TLFHTMDAAI (116 aa)) is the Response regulatory domain. Aspartate 54 bears the 4-aspartylphosphate mark. The region spanning 142–207 (KQRNETQLTE…EAVTIAMQKG (66 aa)) is the HTH luxR-type domain. The segment at residues 166 to 185 (SKAIAFDLGVSERTVKSRLT) is a DNA-binding region (H-T-H motif).

Post-translationally, phosphorylated by YdfH.

The protein resides in the cytoplasm. In terms of biological role, member of the two-component regulatory system YdfH/YdfI. Regulates the transcription of ydfJ by binding to its promoter region. This Bacillus subtilis (strain 168) protein is Transcriptional regulatory protein YdfI (ydfI).